Consider the following 3423-residue polypeptide: Genome polyprotein (3423 aa).

The disordered stretch occupies residues 1-25 (MKNPKKKSGGFRIVNMLKRGVARVS). The Cytoplasmic segment spans residues 1–104 (MKNPKKKSGG…INARKEKKRR (104 aa)). Residues 37-72 (LLLGHGPIRMVLAILAFLRFTAIKPSLGLINRWGSV) are hydrophobic; homodimerization of capsid protein C. Positions 105–122 (GTDTSVGIVGLLLTTAMA) are cleaved as a propeptide — ER anchor for capsid protein C, removed in mature form by serine protease NS3. A helical membrane pass occupies residues 105-125 (GTDTSVGIVGLLLTTAMAVEV). The Extracellular segment spans residues 126–249 (TRRGNAYYMY…YTKHLIRVEN (124 aa)). A glycan (N-linked (GlcNAc...) asparagine; by host) is linked at Asn192. Residues 250-269 (WIFRNPGFALAAAAIAWLLG) traverse the membrane as a helical segment. Residues 270-274 (SSTSQ) lie on the Cytoplasmic side of the membrane. The chain crosses the membrane as a helical span at residues 275-290 (KVIYLVMILLIAPAYS). Residues 291–745 (IRCIGVSNRD…HQIFGAAFKS (455 aa)) lie on the Extracellular side of the membrane. Lys328 participates in a covalent cross-link: Glycyl lysine isopeptide (Lys-Gly) (interchain with G-Cter in ubiquitin). 2 disulfides stabilise this stretch: Cys350–Cys406 and Cys382–Cys411. Residues 388-401 (DRGWGNGCGLFGKG) form a fusion peptide region. Asn444 carries an N-linked (GlcNAc...) asparagine; by host glycan. Disulfide bonds link Cys480-Cys581 and Cys598-Cys629. Lys571 participates in a covalent cross-link: Glycyl lysine isopeptide (Lys-Gly) (interchain with G-Cter in ubiquitin). The helical transmembrane segment at 746 to 767 (LFGGMSWFSQILIGTLLVWLGL) threads the bilayer. At 768–773 (NTKNGS) the chain is on the cytoplasmic side. The helical transmembrane segment at 774 to 794 (ISLMCLALGGVLIFLSTAVSA) threads the bilayer. At 795-1177 (DVGCSVDFSK…EGLKKRMTTK (383 aa)) the chain is on the lumenal side. 6 disulfide bridges follow: Cys798–Cys809, Cys849–Cys937, Cys973–Cys1017, Cys1074–Cys1123, Cys1085–Cys1106, and Cys1107–Cys1110. N-linked (GlcNAc...) asparagine; by host glycosylation is found at Asn924 and Asn1001. Residues 1178-1198 (IIISTSMAVLVAMILGGFSMS) traverse the membrane as a helical segment. The Cytoplasmic segment spans residues 1199-1220 (DLAKLAILMGATFAEMNTGGDV). Residues 1221–1241 (AHLALIAAFKVRPALLVSFIF) traverse the membrane as a helical segment. At 1242 to 1270 (RANWTPRESMLLALASCLLQTAISALEGD) the chain is on the lumenal side. Residues 1271 to 1291 (LMVPINGFALAWLAIRAMVVP) traverse the membrane as a helical segment. Over 1292–1295 (RTDN) the chain is Cytoplasmic. A helical membrane pass occupies residues 1296–1316 (ITLAILAALTPLARGTLLVAW). The Lumenal portion of the chain corresponds to 1317-1345 (RAGLATCGGFMLLSLKGKGSVKKNLPFVM). The chain crosses the membrane as a helical span at residues 1346 to 1366 (ALGLTAVRLVDPINVVGLLLL). At 1367–1373 (TRSGKRS) the chain is on the cytoplasmic side. The chain crosses the membrane as a helical span at residues 1374–1394 (WPPSEVLTAVGLICALAGGFA). Residues 1395-1397 (KAD) are Lumenal-facing. Residues 1398–1418 (IEMAGPMAAVGLLIVSYVVSG) form a helical membrane-spanning segment. Topologically, residues 1419-1472 (KSVDMYIERAGDITWEKDAEVTGNSPRLDVALDESGDFSLVEDDGPPMREIILK) are cytoplasmic. The tract at residues 1425–1464 (IERAGDITWEKDAEVTGNSPRLDVALDESGDFSLVEDDGP) is interacts with and activates NS3 protease. The segment at 1429–1451 (GDITWEKDAEVTGNSPRLDVALD) is disordered. An intramembrane region (helical) is located at residues 1473–1493 (VVLMAICGMNPIAIPFAAGAW). At 1494-2170 (YVYVKTGKRS…KAAAAQLPET (677 aa)) the chain is on the lumenal side. Positions 1503-1680 (SGALWDVPAP…RREEETPVEC (178 aa)) constitute a Peptidase S7 domain. Catalysis depends on charge relay system; for serine protease NS3 activity residues His1553, Asp1577, and Ser1637. The Helicase ATP-binding domain maps to 1683–1839 (PSMLKKKQLT…DSNSPIMDTE (157 aa)). Positions 1687 to 1690 (KKKQ) are important for RNA-binding. 1696-1703 (LHPGAGKT) contributes to the ATP binding site. The short motif at 1787-1790 (DEAH) is the DEAH box element. A Helicase C-terminal domain is found at 1834 to 2013 (PIMDTEVEVP…GLIASLYRPE (180 aa)). Lys1891 carries the N6-acetyllysine; by host modification. A helical transmembrane segment spans residues 2171-2191 (LETIMLLGLLGTVSLGIFFVL). At 2192–2195 (MRNK) the chain is on the lumenal side. Residues 2196 to 2216 (GIGKMGFGMVTLGASAWLMWL) constitute an intramembrane region (helical). At 2217–2218 (SE) the chain is on the cytoplasmic side. The helical transmembrane segment at 2219–2239 (IEPARIACVLIVVFLLLVVLI) threads the bilayer. Over 2240-2254 (PEPEKQRSPQDNQMA) the chain is Lumenal. The helical intramembrane region spans 2255–2269 (IIIMVAVGLLGLITA). Residues 2270–2307 (NELGWLERTKSDLSHLMGRREEGATIGFSMDIDLRPAS) lie on the Lumenal side of the membrane. Positions 2308-2328 (AWAIYAALTTFITPAVQHAVT) form an intramembrane region, helical. Over 2329–2344 (TSYNNYSLMAMATQAG) the chain is Lumenal. The chain crosses the membrane as a helical span at residues 2345 to 2365 (VLFGMGKGMPFYAWDFGVPLL). The Cytoplasmic segment spans residues 2366-2375 (MIGCYSQLTP). The helical transmembrane segment at 2376 to 2396 (LTLIVAIILLVAHYMYLIPGL) threads the bilayer. Residues 2397-2441 (QAAAARAAQKRTAAGIMKNPVVDGIVVTDIDTMTIDPQVEKKMGQ) are Lumenal-facing. The chain crosses the membrane as a helical span at residues 2442–2462 (VLLIAVAVSSAILSRTAWGWG). Topologically, residues 2463 to 3423 (EAGALITAAT…GEEGSTPGVL (961 aa)) are cytoplasmic. The mRNA cap 0-1 NS5-type MT domain occupies 2521–2785 (GGGTGETLGE…DVNLGSGTRA (265 aa)). Position 2533–2539 (2533–2539 (KARLNQM)) interacts with GTP. An S-adenosyl-L-methionine-binding site is contributed by Ser2576. Residue Ser2576 is modified to Phosphoserine. Lys2581 (for 2'-O-MTase activity) is an active-site residue. The segment at 2597–2600 (VIDL) is SUMO-interacting motif (SIM). Positions 2606, 2607, 2624, 2625, 2630, 2631, 2651, 2652, 2666, and 2667 each coordinate S-adenosyl-L-methionine. The active-site For 2'-O-MTase activity is Asp2666. 2669-2675 (ESSSSPE) serves as a coordination point for GTP. The active-site For 2'-O-MTase activity is the Lys2702. 2733 to 2735 (RNS) serves as a coordination point for GTP. Glu2738 serves as the catalytic For 2'-O-MTase activity. Residue Tyr2740 participates in S-adenosyl-L-methionine binding. A Nuclear localization signal (NLS) motif is present at residues 2908 to 2914 (KHKRPRV). 4 residues coordinate Zn(2+): Glu2959, His2963, Cys2968, and Cys2971. In terms of domain architecture, RdRp catalytic spans 3049–3199 (GRMYADDTAG…KPIDDRFAHA (151 aa)). His3234, Cys3250, and Cys3369 together coordinate Zn(2+).

In the N-terminal section; belongs to the class I-like SAM-binding methyltransferase superfamily. mRNA cap 0-1 NS5-type methyltransferase family. In terms of assembly, homodimer. Interacts with host SERTAD3; this interaction promotes capsid protein C degradation. Interacts with host CAPRIN1; this interaction is probably linked to the inhibition of stress granules formation by the virus. Interacts with host G3BP1; this interaction is probably linked to the inhibition of stress granules formation by the virus. As to quaternary structure, forms heterodimers with envelope protein E in the endoplasmic reticulum and Golgi. Interacts with non-structural protein 2A. Homodimer; in the endoplasmic reticulum and Golgi. Interacts with host TYRO3, AXL and DC-SIGN proteins. Interacts with non-structural protein 2A. Interacts with host HAVCR1; this interaction likely mediates virus attachment to host cell. Interacts with host NCAM1. Interacts with host HSPA5. Interacts with Aedes aegypti SRPN25, APY and venom allergen-1 salivary proteins; the interactions do not affect Zika virus replication in human endothelial cells and keratinocytes. In terms of assembly, homodimer; Homohexamer when secreted. Interacts with host TBK1. Interacts with host USP8. Interacts with envelope protein E. As to quaternary structure, interacts with the structural protein prM/E complex, and the NS2B/NS3 protease complex. Forms a heterodimer with serine protease NS3. May form homooligomers. Interacts with human SPCS1. Interacts with non-structural protein 2A. In terms of assembly, forms a heterodimer with NS2B. Interacts with NS4B. Interacts with unphosphorylated RNA-directed RNA polymerase NS5; this interaction stimulates RNA-directed RNA polymerase NS5 guanylyltransferase activity. Interacts with non-structural protein 2A. Interacts with host SHFL; this interaction promotes NS3 degradation via a lysosome-dependent pathway. Interacts with host CEP63; this interaction disorganizes the centrosome and inhibits host innate immune response. As to quaternary structure, may interact with host ANKLE2; the interaction may cause defects in brain development, such as microcephaly. May interact with host SRPRA and SEC61G. Interacts with serine protease NS3. Interacts with NS1. In terms of assembly, homodimer. Interacts with host STAT2; this interaction inhibits the phosphorylation of the latter, and, when all viral proteins are present (polyprotein), targets STAT2 for degradation. Interacts with host TBK1 and IKBKE; these interactions lead to the inhibition of the host RIG-I signaling pathway. Interacts with host PAF1 complex; the interaction may prevent the recruitment of the host PAF1 complex to interferon-responsive genes, and thus reduces the immune response. Interacts with serine protease NS3. Interacts with host KPNA2. Interacts with host ZSWIM8; this interaction allows STAT2 binding to ZSWIM8 and subsequent proteasomal degradation leading to inhibition of interferon signaling. Post-translationally, specific enzymatic cleavages in vivo yield mature proteins. Cleavages in the lumen of endoplasmic reticulum are performed by host signal peptidase, whereas cleavages in the cytoplasmic side are performed by serine protease NS3. Signal cleavage at the 2K-4B site requires a prior NS3 protease-mediated cleavage at the 4A-2K site. In terms of processing, cleaved in post-Golgi vesicles by a host furin, releasing the mature small envelope protein M, and peptide pr. This cleavage is incomplete as up to 30% of viral particles still carry uncleaved prM. N-glycosylation plays a role in virulence in mammalian and mosquito hosts, but may have no effect on neurovirulence. Post-translationally, ubiquitination by host TRIM7 promotes virus attachment and fusion of the virus and the host endosome membrane. In terms of processing, N-glycosylated. The excreted form is glycosylated, which is required for efficient secretion of the protein from infected cells. Ubiquitination by host TRIM22 leads to proteasomal degradation. Post-translationally, acetylated by host KAT5. Acetylation modulates NS3 RNA-binding and unwinding activities and plays an important positive role for viral replication. In terms of processing, phosphorylated on serines residues. This phosphorylation may trigger NS5 nuclear localization. Sumoylated, required for regulating IFN induced interferon stimulated genes/ISGs.

It localises to the virion. It is found in the host nucleus. The protein localises to the host cytoplasm. The protein resides in the host perinuclear region. Its subcellular location is the secreted. It localises to the virion membrane. It is found in the host endoplasmic reticulum membrane. The protein localises to the host cell surface. It carries out the reaction a 5'-end (5'-triphosphoguanosine)-ribonucleoside in mRNA + S-adenosyl-L-methionine = a 5'-end (N(7)-methyl 5'-triphosphoguanosine)-ribonucleoside in mRNA + S-adenosyl-L-homocysteine. It catalyses the reaction a 5'-end (N(7)-methyl 5'-triphosphoguanosine)-ribonucleoside in mRNA + S-adenosyl-L-methionine = a 5'-end (N(7)-methyl 5'-triphosphoguanosine)-(2'-O-methyl-ribonucleoside) in mRNA + S-adenosyl-L-homocysteine + H(+). The enzyme catalyses RNA(n) + a ribonucleoside 5'-triphosphate = RNA(n+1) + diphosphate. The catalysed reaction is Selective hydrolysis of -Xaa-Xaa-|-Yaa- bonds in which each of the Xaa can be either Arg or Lys and Yaa can be either Ser or Ala.. It carries out the reaction a ribonucleoside 5'-triphosphate + H2O = a ribonucleoside 5'-diphosphate + phosphate + H(+). It catalyses the reaction ATP + H2O = ADP + phosphate + H(+). Its function is as follows. Plays a role in virus budding by binding to the cell membrane and gathering the viral RNA into a nucleocapsid that forms the core of the mature virus particle. During virus entry, may induce genome penetration into the host cytoplasm after hemifusion induced by the surface proteins. Can migrate to the cell nucleus where it modulates host functions. Inhibits the integrated stress response (ISR) in the infected cell. Functionally, inhibits RNA silencing by interfering with host Dicer. Prevents premature fusion activity of envelope proteins in trans-Golgi by binding to envelope protein E at pH 6.0. After virion release in extracellular space, gets dissociated from E dimers. In terms of biological role, plays a role in host immune defense modulation and protection of envelope protein E during virion synthesis. PrM-E cleavage is inefficient, many virions are only partially matured and immature prM-E proteins could play a role in immune evasion. Contributes to fetal microcephaly in humans. Acts as a chaperone for envelope protein E during intracellular virion assembly by masking and inactivating envelope protein E fusion peptide. prM is the only viral peptide matured by host furin in the trans-Golgi network probably to avoid catastrophic activation of the viral fusion activity in acidic Golgi compartment prior to virion release. Its function is as follows. May play a role in virus budding. Exerts cytotoxic effects by activating a mitochondrial apoptotic pathway through M ectodomain. May display a viroporin activity. Functionally, binds to host cell surface receptors and mediates fusion between viral and cellular membranes. Efficient virus attachment to cell is, at least in part, mediated by host HAVCR1 in a cell-type specific manner. In addition, host NCAM1 can also be used as entry receptor. Interaction with host HSPA5 plays an important role in the early stages of infection as well. Envelope protein is synthesized in the endoplasmic reticulum and forms a heterodimer with protein prM. The heterodimer plays a role in virion budding in the ER, and the newly formed immature particle is covered with 60 spikes composed of heterodimers between precursor prM and envelope protein E. The virion is transported to the Golgi apparatus where the low pH causes the dissociation of PrM-E heterodimers and formation of E homodimers. PrM-E cleavage is inefficient, many virions are only partially matured and immature prM-E proteins could play a role in immune evasion. Plays a role in the inhibition of host RLR-induced interferon-beta activation by targeting TANK-binding kinase 1/TBK1. In addition, recruits the host deubiquitinase USP8 to cleave 'Lys-11'-linked polyubiquitin chains from caspase-1/CASP1 thus inhibiting its proteasomal degradation. In turn, stabilized CASP1 promotes cleavage of cGAS, which inhibits its ability to recognize mitochondrial DNA release and initiate type I interferon signaling. In terms of biological role, component of the viral RNA replication complex that recruits genomic RNA, the structural protein prM/E complex, and the NS2B/NS3 protease complex to the virion assembly site and orchestrates virus morphogenesis. Also antagonizes the host alpha/beta interferon antiviral response. May disrupt adherens junction formation and thereby impair proliferation of radial cells in the host cortex. Its function is as follows. Required cofactor for the serine protease function of NS3. Functionally, displays three enzymatic activities: serine protease, NTPase and RNA helicase. NS3 serine protease, in association with NS2B, performs its autocleavage and cleaves the polyprotein at dibasic sites in the cytoplasm: C-prM, NS2A-NS2B, NS2B-NS3, NS3-NS4A, NS4A-2K and NS4B-NS5. NS3 RNA helicase binds RNA and unwinds dsRNA in the 3' to 5' direction. Leads to translation arrest when expressed ex vivo. Disrupts host centrosome organization in a CEP63-dependent manner to degrade host TBK1 and inhibits innate immune response. Inhibits the integrated stress response (ISR) in the infected cell. Regulates the ATPase activity of the NS3 helicase activity. NS4A allows NS3 helicase to conserve energy during unwinding. Cooperatively with NS4B suppresses the Akt-mTOR pathway and leads to cellular dysregulation. By inhibiting host ANKLE2 functions, may cause defects in brain development, such as microcephaly. Also antagonizes the host MDA5-mediated induction of alpha/beta interferon antiviral response. Leads to translation arrest when expressed ex vivo. Inhibits the integrated stress response (ISR) in the infected cell. In terms of biological role, functions as a signal peptide for NS4B and is required for the interferon antagonism activity of the latter. Its function is as follows. Induces the formation of ER-derived membrane vesicles where the viral replication takes place. Also plays a role in the inhibition of host RLR-induced interferon-beta production at TANK-binding kinase 1/TBK1 level. Cooperatively with NS4A suppresses the Akt-mTOR pathway and leads to cellular dysregulation. Functionally, replicates the viral (+) and (-) RNA genome, and performs the capping of genomes in the cytoplasm. Methylates viral RNA cap at guanine N-7 and ribose 2'-O positions. Once sufficient NS5 is expressed, binds to the cap-proximal structure and inhibits further translation of the viral genome. Besides its role in RNA genome replication, also prevents the establishment of a cellular antiviral state by blocking the interferon-alpha/beta (IFN-alpha/beta) signaling pathway. Mechanistically, interferes with host kinases TBK1 and IKKE upstream of interferon regulatory factor 3/IRF3 to inhibit the RIG-I pathway. Also antagonizes type I interferon signaling by targeting STAT2 for degradation by the proteasome thereby preventing activation of JAK-STAT signaling pathway. Mechanistically, acts as a scaffold protein to connect host ZSWIM8/CUL3 ligase complex and STAT2, leading to STAT2 degradation. Within the host nucleus, disrupts host SUMO1 and STAT2 co-localization with PML, resulting in PML degradation. May also reduce immune responses by preventing the recruitment of the host PAF1 complex to interferon-responsive genes. The chain is Genome polyprotein from Zika virus (isolate ZIKV/Human/Cambodia/FSS13025/2010) (ZIKV).